A 141-amino-acid chain; its full sequence is Nucleoside diphosphate kinase (141 aa).

Positions 11, 59, 87, 93, 104, and 114 each coordinate ATP. The active-site Pros-phosphohistidine intermediate is H117.

The protein belongs to the NDK family. As to quaternary structure, homotetramer. The cofactor is Mg(2+).

It is found in the cytoplasm. The catalysed reaction is a 2'-deoxyribonucleoside 5'-diphosphate + ATP = a 2'-deoxyribonucleoside 5'-triphosphate + ADP. It catalyses the reaction a ribonucleoside 5'-diphosphate + ATP = a ribonucleoside 5'-triphosphate + ADP. In terms of biological role, major role in the synthesis of nucleoside triphosphates other than ATP. The ATP gamma phosphate is transferred to the NDP beta phosphate via a ping-pong mechanism, using a phosphorylated active-site intermediate. The sequence is that of Nucleoside diphosphate kinase from Cupriavidus taiwanensis (strain DSM 17343 / BCRC 17206 / CCUG 44338 / CIP 107171 / LMG 19424 / R1) (Ralstonia taiwanensis (strain LMG 19424)).